A 192-amino-acid polypeptide reads, in one-letter code: NADH-quinone oxidoreductase subunit B (192 aa).

Residues Cys-71, Cys-72, Cys-136, and Cys-166 each contribute to the [4Fe-4S] cluster site.

Belongs to the complex I 20 kDa subunit family. In terms of assembly, NDH-1 is composed of 14 different subunits. Subunits NuoB, C, D, E, F, and G constitute the peripheral sector of the complex. [4Fe-4S] cluster is required as a cofactor.

Its subcellular location is the cell inner membrane. The catalysed reaction is a quinone + NADH + 5 H(+)(in) = a quinol + NAD(+) + 4 H(+)(out). Functionally, NDH-1 shuttles electrons from NADH, via FMN and iron-sulfur (Fe-S) centers, to quinones in the respiratory chain. Couples the redox reaction to proton translocation (for every two electrons transferred, four hydrogen ions are translocated across the cytoplasmic membrane), and thus conserves the redox energy in a proton gradient. The chain is NADH-quinone oxidoreductase subunit B from Azorhizobium caulinodans (strain ATCC 43989 / DSM 5975 / JCM 20966 / LMG 6465 / NBRC 14845 / NCIMB 13405 / ORS 571).